The following is a 100-amino-acid chain: Small ribosomal subunit protein uS14 (100 aa).

Belongs to the universal ribosomal protein uS14 family. Part of the 30S ribosomal subunit. Contacts proteins S3 and S10.

Its function is as follows. Binds 16S rRNA, required for the assembly of 30S particles and may also be responsible for determining the conformation of the 16S rRNA at the A site. The polypeptide is Small ribosomal subunit protein uS14 (Prochlorococcus marinus (strain AS9601)).